Here is an 89-residue protein sequence, read N- to C-terminus: Large ribosomal subunit protein uL30 (89 aa).

The protein belongs to the universal ribosomal protein uL30 family. As to quaternary structure, part of the 50S ribosomal subunit.

This is Large ribosomal subunit protein uL30 from Myxococcus xanthus (strain DK1622).